Here is a 156-residue protein sequence, read N- to C-terminus: ATP synthase subunit b (156 aa).

The chain crosses the membrane as a helical span at residues 7 to 27 (LFAQIIVFFGLVWFTMKFVWP).

The protein belongs to the ATPase B chain family. As to quaternary structure, F-type ATPases have 2 components, F(1) - the catalytic core - and F(0) - the membrane proton channel. F(1) has five subunits: alpha(3), beta(3), gamma(1), delta(1), epsilon(1). F(0) has three main subunits: a(1), b(2) and c(10-14). The alpha and beta chains form an alternating ring which encloses part of the gamma chain. F(1) is attached to F(0) by a central stalk formed by the gamma and epsilon chains, while a peripheral stalk is formed by the delta and b chains.

It is found in the cell inner membrane. In terms of biological role, f(1)F(0) ATP synthase produces ATP from ADP in the presence of a proton or sodium gradient. F-type ATPases consist of two structural domains, F(1) containing the extramembraneous catalytic core and F(0) containing the membrane proton channel, linked together by a central stalk and a peripheral stalk. During catalysis, ATP synthesis in the catalytic domain of F(1) is coupled via a rotary mechanism of the central stalk subunits to proton translocation. Functionally, component of the F(0) channel, it forms part of the peripheral stalk, linking F(1) to F(0). The protein is ATP synthase subunit b of Neisseria gonorrhoeae (strain NCCP11945).